The primary structure comprises 347 residues: Dihydroorotase (347 aa).

Residues His-17 and His-19 each coordinate Zn(2+). Substrate contacts are provided by residues 19 to 21 (HLR) and Asn-45. Zn(2+)-binding residues include Lys-103, His-140, and His-178. Lys-103 is subject to N6-carboxylysine. His-140 serves as a coordination point for substrate. Leu-223 lines the substrate pocket. Asp-251 contributes to the Zn(2+) binding site. The active site involves Asp-251. Positions 255 and 267 each coordinate substrate.

Belongs to the metallo-dependent hydrolases superfamily. DHOase family. Class II DHOase subfamily. Homodimer. It depends on Zn(2+) as a cofactor.

It carries out the reaction (S)-dihydroorotate + H2O = N-carbamoyl-L-aspartate + H(+). The protein operates within pyrimidine metabolism; UMP biosynthesis via de novo pathway; (S)-dihydroorotate from bicarbonate: step 3/3. Functionally, catalyzes the reversible cyclization of carbamoyl aspartate to dihydroorotate. The polypeptide is Dihydroorotase (Pectobacterium atrosepticum (strain SCRI 1043 / ATCC BAA-672) (Erwinia carotovora subsp. atroseptica)).